Here is a 137-residue protein sequence, read N- to C-terminus: Ribonuclease P protein component (137 aa).

This sequence belongs to the RnpA family. Consists of a catalytic RNA component (M1 or rnpB) and a protein subunit.

It carries out the reaction Endonucleolytic cleavage of RNA, removing 5'-extranucleotides from tRNA precursor.. RNaseP catalyzes the removal of the 5'-leader sequence from pre-tRNA to produce the mature 5'-terminus. It can also cleave other RNA substrates such as 4.5S RNA. The protein component plays an auxiliary but essential role in vivo by binding to the 5'-leader sequence and broadening the substrate specificity of the ribozyme. The chain is Ribonuclease P protein component from Porphyromonas gingivalis (strain ATCC 33277 / DSM 20709 / CIP 103683 / JCM 12257 / NCTC 11834 / 2561).